The sequence spans 132 residues: Small ribosomal subunit protein uS11 (132 aa).

This sequence belongs to the universal ribosomal protein uS11 family. In terms of assembly, part of the 30S ribosomal subunit. Interacts with proteins S7 and S18. Binds to IF-3.

Located on the platform of the 30S subunit, it bridges several disparate RNA helices of the 16S rRNA. Forms part of the Shine-Dalgarno cleft in the 70S ribosome. This Cupriavidus pinatubonensis (strain JMP 134 / LMG 1197) (Cupriavidus necator (strain JMP 134)) protein is Small ribosomal subunit protein uS11.